Reading from the N-terminus, the 407-residue chain is Ribosomal protein uL3-like (407 aa).

Residues 1 to 31 (MSHRKFSAPRHGHLGFLPHKRSHRHRGKVKT) are compositionally biased toward basic residues. Disordered regions lie at residues 1 to 35 (MSHRKFSAPRHGHLGFLPHKRSHRHRGKVKTWPRD) and 387 to 407 (AFMGPQKKHLEKETPETSGDL).

This sequence belongs to the universal ribosomal protein uL3 family. Component of the large ribosomal subunit in striated muscle cells.

In terms of biological role, heart- and skeletal muscle-specific component of the ribosome, which regulates muscle function. Component of the large ribosomal subunit in striated muscle cells: replaces the RPL3 paralog in the ribosome in these cells. The ribosome is a large ribonucleoprotein complex responsible for the synthesis of proteins in the cell. Inhibits myotube growth and muscle function. In Homo sapiens (Human), this protein is Ribosomal protein uL3-like.